Here is a 156-residue protein sequence, read N- to C-terminus: Small ribosomal subunit protein uS7 (156 aa).

The protein belongs to the universal ribosomal protein uS7 family. In terms of assembly, part of the 30S ribosomal subunit. Contacts proteins S9 and S11.

Functionally, one of the primary rRNA binding proteins, it binds directly to 16S rRNA where it nucleates assembly of the head domain of the 30S subunit. Is located at the subunit interface close to the decoding center, probably blocks exit of the E-site tRNA. This Gemmatimonas aurantiaca (strain DSM 14586 / JCM 11422 / NBRC 100505 / T-27) protein is Small ribosomal subunit protein uS7.